The following is a 504-amino-acid chain: Cytochrome P450 2K4 (504 aa).

Heme is bound at residue Cys-447.

Belongs to the cytochrome P450 family. Heme serves as cofactor.

The protein resides in the endoplasmic reticulum membrane. It localises to the microsome membrane. It catalyses the reaction an organic molecule + reduced [NADPH--hemoprotein reductase] + O2 = an alcohol + oxidized [NADPH--hemoprotein reductase] + H2O + H(+). This is Cytochrome P450 2K4 (cyp2k4) from Oncorhynchus mykiss (Rainbow trout).